The following is a 121-amino-acid chain: Large ribosomal subunit protein bL12 (121 aa).

This sequence belongs to the bacterial ribosomal protein bL12 family. In terms of assembly, homodimer. Part of the ribosomal stalk of the 50S ribosomal subunit. Forms a multimeric L10(L12)X complex, where L10 forms an elongated spine to which 2 to 4 L12 dimers bind in a sequential fashion. Binds GTP-bound translation factors.

Functionally, forms part of the ribosomal stalk which helps the ribosome interact with GTP-bound translation factors. Is thus essential for accurate translation. This Shewanella baltica (strain OS185) protein is Large ribosomal subunit protein bL12.